The chain runs to 249 residues: Transmembrane protein 51 (249 aa).

2 consecutive transmembrane segments (helical) span residues 17–37 and 64–84; these read IGLGMLVLGVIMAMWNLVPGF and VAYVLVGAGMMLLLLAICLSI. Disordered regions lie at residues 95–126, 161–199, and 213–249; these read ELARIQQQAGTVPHSQEEDSQEEEEDVSSRYY, TGLDEATPTSTRAETETSPGHAPDRQNSKLAKRLKPLKV, and RITLPDKNVPPPSIEPLTPPPLYDEVQAKAPDARPPD. The segment covering 99-108 has biased composition (polar residues); the sequence is IQQQAGTVPH. A phosphoserine mark is found at serine 109, serine 114, serine 178, and serine 188. Positions 167 to 178 are enriched in polar residues; sequence TPTSTRAETETS. Residues 190 to 199 are compositionally biased toward basic residues; the sequence is LAKRLKPLKV. The segment covering 220–234 has biased composition (pro residues); the sequence is NVPPPSIEPLTPPPL.

The protein resides in the membrane. The chain is Transmembrane protein 51 (Tmem51) from Mus musculus (Mouse).